The primary structure comprises 309 residues: tRNA pseudouridine synthase B (309 aa).

The Nucleophile role is filled by D39.

It belongs to the pseudouridine synthase TruB family. Type 1 subfamily.

The catalysed reaction is uridine(55) in tRNA = pseudouridine(55) in tRNA. Responsible for synthesis of pseudouridine from uracil-55 in the psi GC loop of transfer RNAs. The polypeptide is tRNA pseudouridine synthase B (Bacillus pumilus (strain SAFR-032)).